The chain runs to 262 residues: 14-3-3-like protein B (262 aa).

It belongs to the 14-3-3 family.

The chain is 14-3-3-like protein B from Hordeum vulgare (Barley).